Reading from the N-terminus, the 335-residue chain is Zinc-type alcohol dehydrogenase-like protein SAV2186 (335 aa).

The protein belongs to the zinc-containing alcohol dehydrogenase family. Quinone oxidoreductase subfamily.

This Staphylococcus aureus (strain Mu50 / ATCC 700699) protein is Zinc-type alcohol dehydrogenase-like protein SAV2186.